The primary structure comprises 319 residues: Acetyl-coenzyme A carboxylase carboxyl transferase subunit alpha (319 aa).

Residues 35–296 form the CoA carboxyltransferase C-terminal domain; sequence NIDEEVHRLR…KAQLLADLAD (262 aa).

Belongs to the AccA family. As to quaternary structure, acetyl-CoA carboxylase is a heterohexamer composed of biotin carboxyl carrier protein (AccB), biotin carboxylase (AccC) and two subunits each of ACCase subunit alpha (AccA) and ACCase subunit beta (AccD).

It is found in the cytoplasm. It carries out the reaction N(6)-carboxybiotinyl-L-lysyl-[protein] + acetyl-CoA = N(6)-biotinyl-L-lysyl-[protein] + malonyl-CoA. It participates in lipid metabolism; malonyl-CoA biosynthesis; malonyl-CoA from acetyl-CoA: step 1/1. In terms of biological role, component of the acetyl coenzyme A carboxylase (ACC) complex. First, biotin carboxylase catalyzes the carboxylation of biotin on its carrier protein (BCCP) and then the CO(2) group is transferred by the carboxyltransferase to acetyl-CoA to form malonyl-CoA. The polypeptide is Acetyl-coenzyme A carboxylase carboxyl transferase subunit alpha (Escherichia coli O127:H6 (strain E2348/69 / EPEC)).